We begin with the raw amino-acid sequence, 805 residues long: Sucrose synthase (805 aa).

Positions 275–752 are GT-B glycosyltransferase; it reads MVFNVVILSP…GLKRIEEKYT (478 aa).

This sequence belongs to the glycosyltransferase 1 family. Plant sucrose synthase subfamily. In terms of tissue distribution, expression is at least 10-fold higher in tubers compared to photosynthetically active tissues.

It carries out the reaction an NDP-alpha-D-glucose + D-fructose = a ribonucleoside 5'-diphosphate + sucrose + H(+). Its function is as follows. Sucrose-cleaving enzyme that provides UDP-glucose and fructose for various metabolic pathways. This Solanum tuberosum (Potato) protein is Sucrose synthase.